We begin with the raw amino-acid sequence, 234 residues long: LexA repressor (234 aa).

The tract at residues 1–29 is disordered; that stretch reads MSDAANPEGHKRSLPGRPPGIRADSSGLT. The segment at residues 52–72 is a DNA-binding region (H-T-H motif); it reads MREIGQAVGLSSTSSVAHQLM. Residues 90–109 are disordered; it reads YEVRGSDQAASVQPTDTAGK. Residues Ser158 and Lys195 each act as for autocatalytic cleavage activity in the active site.

It belongs to the peptidase S24 family. As to quaternary structure, homodimer.

It carries out the reaction Hydrolysis of Ala-|-Gly bond in repressor LexA.. Its function is as follows. Represses a number of genes involved in the response to DNA damage (SOS response), including recA and lexA. In the presence of single-stranded DNA, RecA interacts with LexA causing an autocatalytic cleavage which disrupts the DNA-binding part of LexA, leading to derepression of the SOS regulon and eventually DNA repair. This chain is LexA repressor, found in Streptomyces coelicolor (strain ATCC BAA-471 / A3(2) / M145).